The chain runs to 220 residues: Probable transaldolase (220 aa).

The active-site Schiff-base intermediate with substrate is lysine 87.

This sequence belongs to the transaldolase family. Type 3B subfamily.

The protein localises to the cytoplasm. The enzyme catalyses D-sedoheptulose 7-phosphate + D-glyceraldehyde 3-phosphate = D-erythrose 4-phosphate + beta-D-fructose 6-phosphate. It functions in the pathway carbohydrate degradation; pentose phosphate pathway; D-glyceraldehyde 3-phosphate and beta-D-fructose 6-phosphate from D-ribose 5-phosphate and D-xylulose 5-phosphate (non-oxidative stage): step 2/3. Its function is as follows. Transaldolase is important for the balance of metabolites in the pentose-phosphate pathway. This Porphyromonas gingivalis (strain ATCC 33277 / DSM 20709 / CIP 103683 / JCM 12257 / NCTC 11834 / 2561) protein is Probable transaldolase.